The primary structure comprises 215 residues: Large ribosomal subunit protein uL4c (215 aa).

The segment at 51–87 (QKQGTVSTKTRSEVRGGGKKPWRQKGTGRARAGSSRS) is disordered. Basic residues predominate over residues 67–78 (GGKKPWRQKGTG).

Belongs to the universal ribosomal protein uL4 family. As to quaternary structure, part of the 50S ribosomal subunit.

Its subcellular location is the plastid. It localises to the chloroplast. Functionally, probably binds the 23S rRNA. The polypeptide is Large ribosomal subunit protein uL4c (rpl4) (Thalassiosira pseudonana (Marine diatom)).